Consider the following 105-residue polypeptide: Phosphoribosyl-AMP cyclohydrolase (105 aa).

Asp72 serves as a coordination point for Mg(2+). Cys73 is a Zn(2+) binding site. Asp74 and Asp76 together coordinate Mg(2+). The Zn(2+) site is built by Cys89 and Cys96.

The protein belongs to the PRA-CH family. Homodimer. The cofactor is Mg(2+). It depends on Zn(2+) as a cofactor.

It localises to the cytoplasm. The enzyme catalyses 1-(5-phospho-beta-D-ribosyl)-5'-AMP + H2O = 1-(5-phospho-beta-D-ribosyl)-5-[(5-phospho-beta-D-ribosylamino)methylideneamino]imidazole-4-carboxamide. The protein operates within amino-acid biosynthesis; L-histidine biosynthesis; L-histidine from 5-phospho-alpha-D-ribose 1-diphosphate: step 3/9. Catalyzes the hydrolysis of the adenine ring of phosphoribosyl-AMP. This Listeria innocua serovar 6a (strain ATCC BAA-680 / CLIP 11262) protein is Phosphoribosyl-AMP cyclohydrolase.